Consider the following 98-residue polypeptide: DNA-binding protein Fis (98 aa).

A DNA-binding region (H-T-H motif) is located at residues 74-93; sequence QTRAAQMMGINRGTLRKKLK.

The protein belongs to the transcriptional regulatory Fis family. As to quaternary structure, homodimer.

In terms of biological role, activates ribosomal RNA transcription. Plays a direct role in upstream activation of rRNA promoters. The chain is DNA-binding protein Fis from Sodalis glossinidius (strain morsitans).